The following is a 536-amino-acid chain: CTP synthase (536 aa).

The tract at residues 1-268 is amidoligase domain; sequence MSFKSIFLTG…VDFLLSKFGF (268 aa). Residue Ser-14 participates in CTP binding. Ser-14 is a UTP binding site. Residue 15–20 participates in ATP binding; it reads SLGKGL. L-glutamine is bound at residue Tyr-55. Residue Asp-72 coordinates ATP. Mg(2+) is bound by residues Asp-72 and Glu-142. CTP is bound by residues 149-151, 188-193, and Lys-224; these read DIE and KTKPTQ. Residues 188–193 and Lys-224 each bind UTP; that span reads KTKPTQ. Residues 294–532 enclose the Glutamine amidotransferase type-1 domain; that stretch reads RIGLVGKYLE…LSAALDYSLE (239 aa). An L-glutamine-binding site is contributed by Gly-353. Cys-380 acts as the Nucleophile; for glutamine hydrolysis in catalysis. Residues 381-384, Glu-404, and Arg-460 each bind L-glutamine; that span reads LGMQ. Catalysis depends on residues His-505 and Glu-507.

The protein belongs to the CTP synthase family. In terms of assembly, homotetramer.

It carries out the reaction UTP + L-glutamine + ATP + H2O = CTP + L-glutamate + ADP + phosphate + 2 H(+). The enzyme catalyses L-glutamine + H2O = L-glutamate + NH4(+). The catalysed reaction is UTP + NH4(+) + ATP = CTP + ADP + phosphate + 2 H(+). The protein operates within pyrimidine metabolism; CTP biosynthesis via de novo pathway; CTP from UDP: step 2/2. With respect to regulation, allosterically activated by GTP, when glutamine is the substrate; GTP has no effect on the reaction when ammonia is the substrate. The allosteric effector GTP functions by stabilizing the protein conformation that binds the tetrahedral intermediate(s) formed during glutamine hydrolysis. Inhibited by the product CTP, via allosteric rather than competitive inhibition. Functionally, catalyzes the ATP-dependent amination of UTP to CTP with either L-glutamine or ammonia as the source of nitrogen. Regulates intracellular CTP levels through interactions with the four ribonucleotide triphosphates. The polypeptide is CTP synthase (Chlamydia muridarum (strain MoPn / Nigg)).